The chain runs to 1071 residues: MKLIYTEMSYSMTEILVNEARKAADQGYRVFYIAPNSLSFEKEREVLTLLPERGTFSIIVTRFVQMSRYFTVESSPSKQHLDDTTLAMIFYRALMQLKPEDLPSYGRLQNNSVFIEQLVELYKELKNAQLSVHDLTGLDHPQKQEDLIKIIELAETIMIQQDYNQDSPLQSFARAIKLGLLNNQLSKTVIVIDGFSRFSAEEDYLLSLLNNNCQEVIIGSYVSQKAYQKSFIKGNIYEASLHFLQDLAQKYHIKPVFATSNQVFKPAFSRLTQLFEATHDFSQVDWQLQKNDLDHFSLWQCHHQKEEIEHVAKSIRQKLYEGYRYKDILVLLGDMDAYQLQIGPIFDKFEIPYYLGKAEPMAAHPLVQFIESLERSQRYNWRREDILNMLKSGLFGCFDDSDIDRFEEYTQFADIKGFTKFSKPFTINSSRQYPLDFLNEMRQDIVLPLQELFKSQKQLGASLIDKLILFLEKIRLAENMQGLAQSQLEVEKNEEVWKRFTDILTSFHHIFGQEKLRLSDCLALIKTGMKSAQYRVVPATLDVVTIKSYDLVQPHSKPFVYAIGLTQSHFPKQIHHSGLLSDQERARINEIRNYRHFDIASAENSKKNHQTALSLFNAATKELVLSVPTVINETFDDLSPYLKELINFGLPLLDKGKNYLSYDNSDIGNYKALLSQIIAINRQDLIEMSDQDKMFWTVVLRYLRKQLRKQQLELPTSDYRLSTKPLSKEVIEVCFPKGIPLKLSATALTVFYNNQYNYFLKYVLNLNKTESIHPDSRIHGQYLHRVFERLMKDHTQEPFDNKLKQAIYHTNQESFFQQVYQDNAEAEYSLAILEDIVRSTAPILQLNQNIKVIDQEKNFHLDMGNEILVHGIIDRIDQLSDGSLGIVDYKSSANQFDIGTFYNGLSPQLVTYLAALKQIAPHDINQLFGAMYLHLQDPKLDLVTFKQIDNTLVESIYKALTYKGIFSEVEKEHLSTGAYQTKNALYSNDELETLLNYNKYLYLKAAKHIKKGHFLINPYTSDGKTVQGDQLKAITRFEADLDMAQARRLVTLPAKEKKECFLTLMRKESRL.

This sequence belongs to the helicase family. AddB/RexB type 2 subfamily. As to quaternary structure, heterodimer of AddA and RexB. Mg(2+) is required as a cofactor.

In terms of biological role, the heterodimer acts as both an ATP-dependent DNA helicase and an ATP-dependent, dual-direction single-stranded exonuclease. Recognizes the chi site generating a DNA molecule suitable for the initiation of homologous recombination. This subunit has 5' -&gt; 3' nuclease activity but not helicase activity. In Streptococcus pyogenes serotype M12 (strain MGAS9429), this protein is ATP-dependent helicase/deoxyribonuclease subunit B.